Consider the following 417-residue polypeptide: MAWFALYLLSLLWATAGTSTQTQSSCSVPSAQEPLVNGIQVLMENSVTSSAYPNPSILIAMNLAGAYNLKAQKLLTYQLMSSDNNDLTIGQLGLTIMALTSSCRDPGDKVSILQRQMENWAPSSPNAEASAFYGPSLAILALCQKNSEATLPIAVRFAKTLLANSSPFNVDTGAMATLALTCMYNKIPVGSEEGYRSLFGQVLKDIVEKISMKIKDNGIIGDIYSTGLAMQALSVTPEPSKKEWNCKKTTDMILNEIKQGKFHNPMSIAQILPSLKGKTYLDVPQVTCSPDHEVQPTLPSNPGPGPTSASNITVIYTINNQLRGVELLFNETINVSVKSGSVLLVVLEEAQRKNPMFKFETTMTSWGLVVSSINNIAENVNHKTYWQFLSGVTPLNEGVADYIPFNHEHITANFTQY.

The N-terminal stretch at 1–18 (MAWFALYLLSLLWATAGT) is a signal peptide. Disulfide bonds link Cys26/Cys246, Cys103/Cys288, and Cys143/Cys182. A cob(II)alamin-binding site is contributed by Asp171. A Phosphoserine modification is found at Ser191. Positions 222 and 270 each coordinate cob(II)alamin. Asn311, Asn330, and Asn334 each carry an N-linked (GlcNAc...) asparagine glycan. Cob(II)alamin contacts are provided by residues 365 to 370 (SWGLVV) and 386 to 395 (WQFLSGVTPL). N-linked (GlcNAc...) asparagine glycosylation occurs at Asn413.

The protein belongs to the eukaryotic cobalamin transport proteins family. Interacts with CUBN (via CUB domains). Gastric mucosa.

The protein localises to the secreted. Its function is as follows. Promotes absorption of the essential vitamin cobalamin (Cbl) in the ileum. After interaction with CUBN, the CBLIF-cobalamin complex is internalized via receptor-mediated endocytosis. In Homo sapiens (Human), this protein is Cobalamin binding intrinsic factor.